We begin with the raw amino-acid sequence, 621 residues long: Probable potassium transport system protein Kup 2 (621 aa).

Transmembrane regions (helical) follow at residues 9 to 29 (MAGLTLAALGVVYGDIGTSPL), 48 to 68 (IFGILSLIFWSLIFVVSVKYV), 101 to 121 (IVLLGLFGAALFYGDAIITPA), 136 to 156 (SGMEAYVLPMAVGVLVGLFLL), 164 to 184 (VGLMFGPVMMVWFAILGILGL), 210 to 230 (GFHAFLTLGSVVLALTGAEAL), 246 to 266 (WFSLVLPGLGLNYFGQGALLM), 275 to 295 (PFFLLAPDWALLPMIALATLA), 336 to 356 (IYMPFINWALLVAVLVVVLTF), 364 to 384 (AAYGIAVTGTMLITTMLFFVV), 393 to 413 (LPLALGITLLFGVIDTAFFAA), and 418 to 438 (VADGGWLPLVMGMAIFTLMST).

It belongs to the HAK/KUP transporter (TC 2.A.72) family.

The protein resides in the cell inner membrane. It catalyses the reaction K(+)(in) + H(+)(in) = K(+)(out) + H(+)(out). Functionally, transport of potassium into the cell. Likely operates as a K(+):H(+) symporter. In Chromobacterium violaceum (strain ATCC 12472 / DSM 30191 / JCM 1249 / CCUG 213 / NBRC 12614 / NCIMB 9131 / NCTC 9757 / MK), this protein is Probable potassium transport system protein Kup 2.